A 101-amino-acid chain; its full sequence is Small ribosomal subunit protein uS14 (101 aa).

Belongs to the universal ribosomal protein uS14 family. In terms of assembly, part of the 30S ribosomal subunit. Contacts proteins S3 and S10.

Its function is as follows. Binds 16S rRNA, required for the assembly of 30S particles and may also be responsible for determining the conformation of the 16S rRNA at the A site. The polypeptide is Small ribosomal subunit protein uS14 (Haemophilus influenzae (strain 86-028NP)).